Consider the following 214-residue polypeptide: Pyridoxine/pyridoxamine 5'-phosphate oxidase (214 aa).

Substrate is bound by residues 9–12 (RREY) and Lys67. Residues 62–67 (RTVLLK), 77–78 (YS), Arg83, Lys84, and Gln106 each bind FMN. Substrate contacts are provided by Tyr124, Arg128, and Ser132. FMN-binding positions include 141–142 (QS) and Trp186. 192–194 (RLH) is a binding site for substrate. Residue Arg196 coordinates FMN.

This sequence belongs to the pyridoxamine 5'-phosphate oxidase family. In terms of assembly, homodimer. Requires FMN as cofactor.

The catalysed reaction is pyridoxamine 5'-phosphate + O2 + H2O = pyridoxal 5'-phosphate + H2O2 + NH4(+). It catalyses the reaction pyridoxine 5'-phosphate + O2 = pyridoxal 5'-phosphate + H2O2. It participates in cofactor metabolism; pyridoxal 5'-phosphate salvage; pyridoxal 5'-phosphate from pyridoxamine 5'-phosphate: step 1/1. Its pathway is cofactor metabolism; pyridoxal 5'-phosphate salvage; pyridoxal 5'-phosphate from pyridoxine 5'-phosphate: step 1/1. Its function is as follows. Catalyzes the oxidation of either pyridoxine 5'-phosphate (PNP) or pyridoxamine 5'-phosphate (PMP) into pyridoxal 5'-phosphate (PLP). The protein is Pyridoxine/pyridoxamine 5'-phosphate oxidase of Porphyromonas gingivalis (strain ATCC BAA-308 / W83).